An 891-amino-acid chain; its full sequence is DNA mismatch repair protein MutS (891 aa).

646–653 (GPNMAGKS) contributes to the ATP binding site.

Belongs to the DNA mismatch repair MutS family.

In terms of biological role, this protein is involved in the repair of mismatches in DNA. It is possible that it carries out the mismatch recognition step. This protein has a weak ATPase activity. This Rickettsia massiliae (strain Mtu5) protein is DNA mismatch repair protein MutS.